Reading from the N-terminus, the 576-residue chain is Arginine--tRNA ligase (576 aa).

The 'HIGH' region motif lies at 126–136 (ANPTGPMHIGH).

Belongs to the class-I aminoacyl-tRNA synthetase family. Monomer.

It localises to the cytoplasm. The catalysed reaction is tRNA(Arg) + L-arginine + ATP = L-arginyl-tRNA(Arg) + AMP + diphosphate. The sequence is that of Arginine--tRNA ligase from Rickettsia felis (strain ATCC VR-1525 / URRWXCal2) (Rickettsia azadi).